The following is a 155-amino-acid chain: DNA-directed RNA polymerases I, II, and III subunit RPABC2 (155 aa).

Residues 1 to 19 (MSDYEEAFNDGNENFEDFD) are compositionally biased toward acidic residues. The tract at residues 1–57 (MSDYEEAFNDGNENFEDFDVEHFSDEETYEEKPQFKDGETTDANGKTIVTGGNGPED) is disordered. Residues 20–39 (VEHFSDEETYEEKPQFKDGE) are compositionally biased toward basic and acidic residues. S24 carries the post-translational modification Phosphoserine. A leucine-zipper region spans residues 111–132 (LEGETDPLRIAMKELAEKKIPL).

It belongs to the archaeal Rpo6/eukaryotic RPB6 RNA polymerase subunit family. As to quaternary structure, component of the RNA polymerase I (Pol I), RNA polymerase II (Pol II) and RNA polymerase III (Pol III) complexes. Component of the RNA polymerase I (Pol I) complex consisting of 14 subunits: RPA135, RPA190, RPC40, RPA14, RPB5, RPO26, RPA43, RPB8, RPA12, RPB10, RPC19, RPC10, RPA49 and RPA34. The complex is composed of a horseshoe-shaped core containing ten subunits (RPA135, RPA190, RPB5, RPO26, RPB8, RPB10, RPC10, RPA12, RPC19 and RPC40) where RPA135 and RPA190 form the DNA-binding cleft. Outside of the core, RPA14 and RPA43 form the stalk that mediates interactions with transcription initiation factors and newly synthesized RNA. Component of the RNA polymerase II (Pol II) complex consisting of 12 subunits: RPO21, RPB2, RPB3, RPB4, RPB5, RPO26, RPB7, RPB8, RPB9, RPB10 and RPC10. Component of the RNA polymerase III (Pol III) complex consisting of 17 subunits.

It localises to the cytoplasm. Its subcellular location is the nucleus. Its function is as follows. DNA-dependent RNA polymerases catalyze the transcription of DNA into RNA using the four ribonucleoside triphosphates as substrates. Common component of RNA polymerases I, II and III which synthesize ribosomal RNA precursors, mRNA precursors and many functional non-coding RNAs, and small RNAs, such as 5S rRNA and tRNAs, respectively. Pol II is the central component of the basal RNA polymerase II transcription machinery. RNA polymerases are composed of mobile elements that move relative to each other. In Pol II, RPB6 is part of the clamp element and together with parts of RPB1 and RPB2 forms a pocket to which the RPB4-RPB7 subcomplex binds. This Saccharomyces cerevisiae (strain ATCC 204508 / S288c) (Baker's yeast) protein is DNA-directed RNA polymerases I, II, and III subunit RPABC2 (RPO26).